The chain runs to 314 residues: Beta-ketoacyl-[acyl-carrier-protein] synthase III (314 aa).

Catalysis depends on residues Cys112 and His241. The interval 242 to 246 (QANIR) is ACP-binding. Residue Asn271 is part of the active site.

The protein belongs to the thiolase-like superfamily. FabH family. As to quaternary structure, homodimer.

It is found in the cytoplasm. It carries out the reaction malonyl-[ACP] + acetyl-CoA + H(+) = 3-oxobutanoyl-[ACP] + CO2 + CoA. It participates in lipid metabolism; fatty acid biosynthesis. Catalyzes the condensation reaction of fatty acid synthesis by the addition to an acyl acceptor of two carbons from malonyl-ACP. Catalyzes the first condensation reaction which initiates fatty acid synthesis and may therefore play a role in governing the total rate of fatty acid production. Possesses both acetoacetyl-ACP synthase and acetyl transacylase activities. Its substrate specificity determines the biosynthesis of branched-chain and/or straight-chain of fatty acids. The chain is Beta-ketoacyl-[acyl-carrier-protein] synthase III from Vesicomyosocius okutanii subsp. Calyptogena okutanii (strain HA).